The sequence spans 246 residues: tRNA (guanine-N(1)-)-methyltransferase (246 aa).

S-adenosyl-L-methionine-binding positions include G117 and 137-142 (IGDYVL).

This sequence belongs to the RNA methyltransferase TrmD family. As to quaternary structure, homodimer.

The protein resides in the cytoplasm. The enzyme catalyses guanosine(37) in tRNA + S-adenosyl-L-methionine = N(1)-methylguanosine(37) in tRNA + S-adenosyl-L-homocysteine + H(+). Its function is as follows. Specifically methylates guanosine-37 in various tRNAs. This Acinetobacter baumannii (strain ACICU) protein is tRNA (guanine-N(1)-)-methyltransferase.